We begin with the raw amino-acid sequence, 457 residues long: MGAMAQNPPNLRPDLAPRLVIDSPRREGQPTIGMVSLGCPKALVDSERILTRLRAEGYAISPDYAGADAVIVNTCGFLDSAKAESLEAIGEALRENGRVIVTGCLGAEPDYITGAHPKVLAVTGPHQYEQVLDAVHGAVPPAPDPFVDLLPATGVRLTPRHFSYLKISEGCNHSCRFCIIPDMRGRLVSRPERAVLREAEKLVEAGVRELLVISQDTSAYGTDWKGPVRFPILPLARELGQLGAWVRLHYVYPYPHVRELIPLMAEGLILPYLDIPFQHAHPEVLKRMARPAAAARTLDEIAAWRRDCPDITLRSTFIVGYPGETEEEFQTLLDWLDEAQLDRVGCFQYENVAGARSNALPDHVAPELKQERWERFMQKAQAISEAKLAARIGQRLEVIVDEVDGEGATCRTKADAPEIDGNLFIDEGFEALSPGDLLTVEVEEAGEYDLWGRAVLV.

Positions 30–140 (PTIGMVSLGC…VLDAVHGAVP (111 aa)) constitute an MTTase N-terminal domain. 6 residues coordinate [4Fe-4S] cluster: C39, C75, C104, C171, C175, and C178. The Radical SAM core domain maps to 157–386 (LTPRHFSYLK…MQKAQAISEA (230 aa)). A TRAM domain is found at 389–456 (AARIGQRLEV…EYDLWGRAVL (68 aa)).

Belongs to the methylthiotransferase family. RimO subfamily. Requires [4Fe-4S] cluster as cofactor.

Its subcellular location is the cytoplasm. It catalyses the reaction L-aspartate(89)-[ribosomal protein uS12]-hydrogen + (sulfur carrier)-SH + AH2 + 2 S-adenosyl-L-methionine = 3-methylsulfanyl-L-aspartate(89)-[ribosomal protein uS12]-hydrogen + (sulfur carrier)-H + 5'-deoxyadenosine + L-methionine + A + S-adenosyl-L-homocysteine + 2 H(+). Functionally, catalyzes the methylthiolation of an aspartic acid residue of ribosomal protein uS12. This Cereibacter sphaeroides (strain ATCC 17025 / ATH 2.4.3) (Rhodobacter sphaeroides) protein is Ribosomal protein uS12 methylthiotransferase RimO.